The chain runs to 326 residues: Glyoxylate/hydroxypyruvate reductase B (326 aa).

Residues Arg-237 and Glu-266 contribute to the active site. His-285 (proton donor) is an active-site residue.

It belongs to the D-isomer specific 2-hydroxyacid dehydrogenase family. GhrB subfamily. Homodimer.

Its subcellular location is the cytoplasm. It catalyses the reaction glycolate + NADP(+) = glyoxylate + NADPH + H(+). The catalysed reaction is (R)-glycerate + NAD(+) = 3-hydroxypyruvate + NADH + H(+). The enzyme catalyses (R)-glycerate + NADP(+) = 3-hydroxypyruvate + NADPH + H(+). Catalyzes the NADPH-dependent reduction of glyoxylate and hydroxypyruvate into glycolate and glycerate, respectively. The protein is Glyoxylate/hydroxypyruvate reductase B of Yersinia pseudotuberculosis serotype O:3 (strain YPIII).